A 548-amino-acid chain; its full sequence is Glycosyl hydrolase family 109 protein 3 (548 aa).

A signal peptide spans 1–21 (MKLKKLLLSVLMLLSISGLQA). Residues 71-72 (MR), aspartate 93, 141-144 (WNHH), 161-162 (EV), and asparagine 190 each bind NAD(+). Tyrosine 219 serves as a coordination point for substrate. 240–244 (DNLHW) serves as a coordination point for NAD(+). Substrate is bound by residues arginine 245, 257–260 (YATH), and tyrosine 335. Tyrosine 257 provides a ligand contact to NAD(+).

Belongs to the Gfo/Idh/MocA family. Glycosyl hydrolase 109 subfamily. NAD(+) serves as cofactor.

In terms of biological role, glycosidase. The polypeptide is Glycosyl hydrolase family 109 protein 3 (Phocaeicola vulgatus (strain ATCC 8482 / DSM 1447 / JCM 5826 / CCUG 4940 / NBRC 14291 / NCTC 11154) (Bacteroides vulgatus)).